We begin with the raw amino-acid sequence, 665 residues long: DNA ligase (665 aa).

Residues 31–35, 80–81, and glutamate 111 contribute to the NAD(+) site; these read DEEFD and SL. The active-site N6-AMP-lysine intermediate is lysine 113. Residues arginine 134, glutamate 171, lysine 287, and lysine 311 each coordinate NAD(+). Zn(2+) contacts are provided by cysteine 405, cysteine 408, cysteine 423, and cysteine 429. The BRCT domain maps to 588–665; it reads FTNHAFQGKI…NEKEFISLCH (78 aa).

The protein belongs to the NAD-dependent DNA ligase family. LigA subfamily. The cofactor is Mg(2+). Mn(2+) is required as a cofactor.

The enzyme catalyses NAD(+) + (deoxyribonucleotide)n-3'-hydroxyl + 5'-phospho-(deoxyribonucleotide)m = (deoxyribonucleotide)n+m + AMP + beta-nicotinamide D-nucleotide.. Functionally, DNA ligase that catalyzes the formation of phosphodiester linkages between 5'-phosphoryl and 3'-hydroxyl groups in double-stranded DNA using NAD as a coenzyme and as the energy source for the reaction. It is essential for DNA replication and repair of damaged DNA. The sequence is that of DNA ligase from Protochlamydia amoebophila (strain UWE25).